The following is a 217-amino-acid chain: Uracil-DNA glycosylase (217 aa).

D62 acts as the Proton acceptor in catalysis.

It belongs to the uracil-DNA glycosylase (UDG) superfamily. UNG family.

Its subcellular location is the cytoplasm. The catalysed reaction is Hydrolyzes single-stranded DNA or mismatched double-stranded DNA and polynucleotides, releasing free uracil.. Excises uracil residues from the DNA which can arise as a result of misincorporation of dUMP residues by DNA polymerase or due to deamination of cytosine. The polypeptide is Uracil-DNA glycosylase (Streptococcus pyogenes serotype M6 (strain ATCC BAA-946 / MGAS10394)).